The sequence spans 299 residues: Pyridoxal 5'-phosphate synthase subunit PdxS (299 aa).

Aspartate 24 serves as a coordination point for D-ribose 5-phosphate. Residue lysine 81 is the Schiff-base intermediate with D-ribose 5-phosphate of the active site. Glycine 153 lines the D-ribose 5-phosphate pocket. Arginine 165 lines the D-glyceraldehyde 3-phosphate pocket. Residues glycine 219 and 240–241 (GS) each bind D-ribose 5-phosphate.

It belongs to the PdxS/SNZ family. In terms of assembly, in the presence of PdxT, forms a dodecamer of heterodimers.

The enzyme catalyses aldehydo-D-ribose 5-phosphate + D-glyceraldehyde 3-phosphate + L-glutamine = pyridoxal 5'-phosphate + L-glutamate + phosphate + 3 H2O + H(+). The protein operates within cofactor biosynthesis; pyridoxal 5'-phosphate biosynthesis. Its function is as follows. Catalyzes the formation of pyridoxal 5'-phosphate from ribose 5-phosphate (RBP), glyceraldehyde 3-phosphate (G3P) and ammonia. The ammonia is provided by the PdxT subunit. Can also use ribulose 5-phosphate and dihydroxyacetone phosphate as substrates, resulting from enzyme-catalyzed isomerization of RBP and G3P, respectively. This is Pyridoxal 5'-phosphate synthase subunit PdxS from Methanococcus aeolicus (strain ATCC BAA-1280 / DSM 17508 / OCM 812 / Nankai-3).